Reading from the N-terminus, the 557-residue chain is MFS-type transporter clz4 (557 aa).

14 helical membrane-spanning segments follow: residues 22-42 (LIIVILTLGVVLFVINIDHNG), 59-79 (SITWAGSSQLIATTVFSVLYG), 89-109 (ALFVSALWVFSIAELGCGFAT), 120-140 (LTGASGGGIGNLSIIIATDVV), 150-170 (AVVAPFMVLGNICGPLVAAGV), 179-199 (GLFWLISPLGVLSAVLAGYIL), 217-237 (WLGSFTSTIAIVGFMVAVSGP), 245-265 (SLLVISLLSVSGVAFLAFLFI), 269-289 (LATLPVIPLTIFAIPDVSALL), 319-339 (VISGVLLFPIIAVQVVVSMIA), 346-366 (SGQYGLTIRLGVALLLIGSLL), 379-399 (VIIVLLVIGIGVGAANQPMVI), 419-439 (FFRFLGSACGVVMSAAILQST), and 479-499 (HVYIASAAASVLCSLGLFVWK). The segment covering 505–523 (SRPTENNDDIEHAPARGIE) has biased composition (basic and acidic residues). Residues 505 to 557 (SRPTENNDDIEHAPARGIEREDEQSSLIYDREPSAVSYGTVEAGEPNRLRRGG) form a disordered region.

It belongs to the major facilitator superfamily. TCR/Tet family.

It localises to the membrane. MFS-type transporter; part of the gene cluster that mediates the biosynthesis of squalestatin S1 (SQS1, also known as zaragozic acid A), a heavily oxidized fungal polyketide that offers potent cholesterol lowering activity by targeting squalene synthase (SS). The protein is MFS-type transporter clz4 of Cochliobolus lunatus (Filamentous fungus).